The sequence spans 207 residues: ATP-dependent Clp protease proteolytic subunit (207 aa).

Ser-111 serves as the catalytic Nucleophile. The active site involves His-136.

This sequence belongs to the peptidase S14 family. Fourteen ClpP subunits assemble into 2 heptameric rings which stack back to back to give a disk-like structure with a central cavity, resembling the structure of eukaryotic proteasomes. Component of the ClpAP and ClpXP complexes.

It is found in the cytoplasm. It carries out the reaction Hydrolysis of proteins to small peptides in the presence of ATP and magnesium. alpha-casein is the usual test substrate. In the absence of ATP, only oligopeptides shorter than five residues are hydrolyzed (such as succinyl-Leu-Tyr-|-NHMec, and Leu-Tyr-Leu-|-Tyr-Trp, in which cleavage of the -Tyr-|-Leu- and -Tyr-|-Trp bonds also occurs).. Functionally, cleaves peptides in various proteins in a process that requires ATP hydrolysis. Has a chymotrypsin-like activity. Plays a major role in the degradation of misfolded proteins. This chain is ATP-dependent Clp protease proteolytic subunit, found in Escherichia coli O139:H28 (strain E24377A / ETEC).